The chain runs to 256 residues: MEDVQNSPAKVAMSIDRVGVRDLTLPLVVRDRESGSQSTMAKVALSVDLPAHFKGTHMSRFVEALEDWSEELDYQSFYNLLSDILRRLEAERAHAELSFPYCLQKKSPVSGRKGIMSYECTVEGEMVGDNLEFTLGVKVPVMTVCPCSKAISDEGAHSQRAVVHIRTKSKGFVWIEDLVEIAEASGSCEVFSLLKREDEKHVTEKSFSNPTFVEDVVRNAAMGLEKHSKILWYQVDVESFESIHNHCAFASIAKPK.

It belongs to the GTP cyclohydrolase IV family.

It catalyses the reaction GTP + H2O = 7,8-dihydroneopterin 3'-triphosphate + formate + H(+). The protein operates within cofactor biosynthesis; 7,8-dihydroneopterin triphosphate biosynthesis; 7,8-dihydroneopterin triphosphate from GTP: step 1/1. In terms of biological role, converts GTP to 7,8-dihydroneopterin triphosphate. The polypeptide is GTP cyclohydrolase FolE2 (Maridesulfovibrio salexigens (strain ATCC 14822 / DSM 2638 / NCIMB 8403 / VKM B-1763) (Desulfovibrio salexigens)).